Reading from the N-terminus, the 275-residue chain is UPF0758 protein RL2068 (275 aa).

The segment at 1–45 (MAKGPVSTSSDDELPFETQEPIAADERSFFGGQPQKPSAPNARAA) is disordered. In terms of domain architecture, MPN spans 153-275 (VLSSWSSVIQ…HVSLKGLKLI (123 aa)). His-224, His-226, and Asp-237 together coordinate Zn(2+). The JAMM motif motif lies at 224–237 (HNHPSGDPTPSRAD).

This sequence belongs to the UPF0758 family.

The protein is UPF0758 protein RL2068 of Rhizobium johnstonii (strain DSM 114642 / LMG 32736 / 3841) (Rhizobium leguminosarum bv. viciae).